The chain runs to 386 residues: ATP synthase gamma chain 2, chloroplastic (386 aa).

The disordered stretch occupies residues 1 to 22 (MTGSISTSWLLSSPSNSNSASS). Residues 1–60 (MTGSISTSWLLSSPSNSNSASSSESYSFIATLKPVRYYPFQSLTPNRISSRSPLPSIQIR) constitute a chloroplast transit peptide. C149 is an active-site residue. C260 and C266 form a disulfide bridge.

Belongs to the ATPase gamma chain family. F-type ATPases have 2 components, CF(1) - the catalytic core - and CF(0) - the membrane proton channel. CF(1) has five subunits: alpha(3), beta(3), gamma(1), delta(1), epsilon(1). CF(0) has four main subunits: a, b, b' and c.

The protein resides in the plastid. It localises to the chloroplast thylakoid membrane. Its function is as follows. Produces ATP from ADP in the presence of a proton gradient across the membrane. The gamma chain is believed to be important in regulating ATPase activity and the flow of protons through the CF(0) complex. The polypeptide is ATP synthase gamma chain 2, chloroplastic (ATPC2) (Arabidopsis thaliana (Mouse-ear cress)).